A 443-amino-acid chain; its full sequence is Citrate transporter CitP (443 aa).

Transmembrane regions (helical) follow at residues 27–47 (ISGI…IAIS), 59–79 (IFAL…LPIF), 83–103 (LGGG…TNVM), 114–134 (FING…SSLF), 151–171 (VAFI…VIIG), 177–197 (AILY…IVPL), 209–229 (SAGI…LAII), 268–288 (YVQL…GTML), 294–314 (GINA…FGLL), 322–342 (VIMF…AGVG), 350–370 (VLLA…IVAI), 388–410 (AAIT…VLAA), and 422–442 (MGNR…VTFM).

Belongs to the 2-hydroxycarboxylate transporter (2-HCT) (TC 2.A.24) family.

Its subcellular location is the cell membrane. The enzyme catalyses (R)-lactate(in) + citrate(out) = (R)-lactate(out) + citrate(in). It catalyses the reaction (S)-lactate(in) + citrate(out) = (S)-lactate(out) + citrate(in). The catalysed reaction is citrate(in) + H(+)(in) = citrate(out) + H(+)(out). Uptake of citrate is not affected by the absence or presence of Na(+) up to 25 mM and is increasingly inhibited by increasing Mg(2+) concentrations. Its function is as follows. Secondary transporter involved in citrate metabolism. During cometabolism of citrate and glucose, catalyzes the uptake of divalent citrate into the cell coupled to the exit of monovalent lactate, a product of citrate fermentation during citrate-glucose cometabolism (precursor/product exchange). The citrate/lactate exchange is electrogenic and results in the generation of a membrane potential. In the absence of glucose, i.e. when no lactate is produced, CitP catalyzes the proton-dependent transport of citrate and malate. Transports the divalent form of citrate and malate with the concomitant uptake of one proton, therefore translocating a single unit of negative charge across the membrane. In vitro, transports a range of substrates that contain the 2-hydroxycarboxylate motif, HO-CR(2)-COO(-), with a preference for malate, citrate and monovalent 2-hydroxyisobutyrate. Modification of the OH or the COO(-) groups of the 2-hydroxycarboxylate motif drastically reduces the affinity of the transporter for the substrates, indicating their relevance in substrate recognition. Significant activity is also observed with some 2-oxocarboxylates and a 3-hydroxycarboxylate. The chain is Citrate transporter CitP from Leuconostoc mesenteroides subsp. mesenteroides.